A 123-amino-acid polypeptide reads, in one-letter code: Large ribosomal subunit protein uL29 (123 aa).

At Lys-19 the chain carries N6-acetyllysine. Lys-25 is covalently cross-linked (Glycyl lysine isopeptide (Lys-Gly) (interchain with G-Cter in SUMO2)). Ser-29 is subject to Phosphoserine. Position 43 is an N6-acetyllysine (Lys-43). The disordered stretch occupies residues 100-123; sequence EKLKTKKQQRKERLYPLRKYAVKA.

It belongs to the universal ribosomal protein uL29 family. Component of the large ribosomal subunit.

It localises to the cytoplasm. Functionally, component of the large ribosomal subunit. The ribosome is a large ribonucleoprotein complex responsible for the synthesis of proteins in the cell. The polypeptide is Large ribosomal subunit protein uL29 (Rpl35) (Mus musculus (Mouse)).